The sequence spans 463 residues: Cis-zeatin O-glucosyltransferase 2 (463 aa).

H21 functions as the Proton acceptor in the catalytic mechanism. Residues H21 and N91 each contribute to the an anthocyanidin site. D127 (charge relay) is an active-site residue. Residues A339, Q341, H356, W359, N360, S361, E364, D380, and Q381 each coordinate UDP-alpha-D-glucose.

It belongs to the UDP-glycosyltransferase family. In terms of tissue distribution, highly expressed in root. Expressed at much lower level in kernel. Weakly or not expressed in expressed in stems and leaves.

It catalyses the reaction cis-zeatin + UDP-alpha-D-glucose = O-beta-D-glucosyl-cis-zeatin + UDP + H(+). In terms of biological role, utilizes UDP-glucose as the sugar donor and catalyzes the formation of O-beta-D-glucosyl-cis-zeatin from cis-zeatin. May regulate active versus storage forms of cytokinins and could have an impact on seed growth. This Zea mays (Maize) protein is Cis-zeatin O-glucosyltransferase 2.